We begin with the raw amino-acid sequence, 94 residues long: FXYD domain-containing ion transport regulator 6 (94 aa).

The N-terminal stretch at 1–17 is a signal peptide; that stretch reads METVLVLCSLLAPVVLA. At 18-34 the chain is on the extracellular side; it reads SAAEKEKEKDPFYYDYQ. The helical transmembrane segment at 35 to 57 threads the bilayer; the sequence is TLRIGGLVFAVVLFSVGILLILS. Residues 58–94 are Cytoplasmic-facing; the sequence is RRCKCSFNQKPRAPGDEEAQVENLITTNAAEPQKAEN.

Belongs to the FXYD family. As to quaternary structure, regulatory subunit of the sodium/potassium-transporting ATPase which is composed of a catalytic alpha subunit, a non-catalytic beta subunit and an additional regulatory subunit. The regulatory subunit, a member of the FXYD protein family, modulates the enzymatic activity in a tissue- and isoform-specific way by changing affinities of the Na+/K+-ATPase toward Na(+), K(+) or ATP.

Its subcellular location is the cell membrane. In terms of biological role, associates with and regulates the activity of the sodium/potassium-transporting ATPase (NKA) which catalyzes the hydrolysis of ATP coupled with the exchange of Na(+) and K(+) ions across the plasma membrane. Reduces the apparent affinity for intracellular Na(+) with no change in the apparent affinity for extracellular K(+). In addition to modulating NKA kinetics, may also function as a regulator of NKA localization to the plasma membrane. This Mus musculus (Mouse) protein is FXYD domain-containing ion transport regulator 6 (Fxyd6).